Consider the following 191-residue polypeptide: Succinoglycan biosynthesis protein ExoI (191 aa).

Positions 1 to 21 (MTRIKSAVAAGGRRAPHSARL) are disordered.

It participates in glycan metabolism; exopolysaccharide biosynthesis. In Rhizobium meliloti (strain 1021) (Ensifer meliloti), this protein is Succinoglycan biosynthesis protein ExoI (exoI).